Reading from the N-terminus, the 548-residue chain is Beta-caryophyllene synthase (548 aa).

Residues R268, D305, D309, R446, and D449 each contribute to the (2E,6E)-farnesyl diphosphate site. D305 and D309 together coordinate Mg(2+). Residues 305–309 (DDIYD) carry the DDXXD motif motif. Positions 449 and 457 each coordinate Mg(2+).

It belongs to the terpene synthase family. Mg(2+) serves as cofactor.

It catalyses the reaction (2E,6E)-farnesyl diphosphate = (-)-(E)-beta-caryophyllene + diphosphate. The protein operates within secondary metabolite biosynthesis; terpenoid biosynthesis. Functionally, sesquiterpene synthase that catalyzes the formation of sesquiterpenes and sesquiterpenoid alcohols. Converts farnesyl diphosphate (FPP) to beta-caryophyllene. Can use geranyl diphosphate (GPP) to produce myrcene, limonene and camphene. The sequence is that of Beta-caryophyllene synthase from Lavandula angustifolia (Lavender).